A 123-amino-acid chain; its full sequence is WAP four-disulfide core domain protein 5 (123 aa).

The signal sequence occupies residues 1–24 (MRIQSLLLLGALLAVGSQLPAVFG). WAP domains are found at residues 27–73 (KGEK…CIPR) and 74–121 (VSVK…RDPA). 8 cysteine pairs are disulfide-bonded: Cys34–Cys62, Cys41–Cys66, Cys49–Cys61, Cys55–Cys70, Cys81–Cys109, Cys88–Cys113, Cys96–Cys108, and Cys102–Cys117.

It localises to the secreted. Its function is as follows. Putative acid-stable proteinase inhibitor. This chain is WAP four-disulfide core domain protein 5 (WFDC5), found in Macaca mulatta (Rhesus macaque).